The chain runs to 126 residues: Aspartate 1-decarboxylase (126 aa).

The active-site Schiff-base intermediate with substrate; via pyruvic acid is the Ser25. Ser25 carries the post-translational modification Pyruvic acid (Ser). Substrate is bound at residue Thr57. Tyr58 (proton donor) is an active-site residue. Substrate is bound at residue 73–75 (GSA).

It belongs to the PanD family. In terms of assembly, heterooctamer of four alpha and four beta subunits. Pyruvate is required as a cofactor. Post-translationally, is synthesized initially as an inactive proenzyme, which is activated by self-cleavage at a specific serine bond to produce a beta-subunit with a hydroxyl group at its C-terminus and an alpha-subunit with a pyruvoyl group at its N-terminus.

It is found in the cytoplasm. The catalysed reaction is L-aspartate + H(+) = beta-alanine + CO2. Its pathway is cofactor biosynthesis; (R)-pantothenate biosynthesis; beta-alanine from L-aspartate: step 1/1. Functionally, catalyzes the pyruvoyl-dependent decarboxylation of aspartate to produce beta-alanine. This Chromobacterium violaceum (strain ATCC 12472 / DSM 30191 / JCM 1249 / CCUG 213 / NBRC 12614 / NCIMB 9131 / NCTC 9757 / MK) protein is Aspartate 1-decarboxylase.